A 330-amino-acid chain; its full sequence is GTPase Obg (330 aa).

The Obg domain maps to 1–159 (MNFIDEVKIY…MWIHLSLKLL (159 aa)). One can recognise an OBG-type G domain in the interval 160 to 327 (SDVGLVGLPN…IVKLALKIIK (168 aa)). GTP contacts are provided by residues 166–173 (GLPNAGKS), 191–195 (FTTLV), 212–215 (DIPG), 279–282 (NKCD), and 308–310 (STY). Residues Ser173 and Thr193 each contribute to the Mg(2+) site.

It belongs to the TRAFAC class OBG-HflX-like GTPase superfamily. OBG GTPase family. In terms of assembly, monomer. Mg(2+) serves as cofactor.

It is found in the cytoplasm. In terms of biological role, an essential GTPase which binds GTP, GDP and possibly (p)ppGpp with moderate affinity, with high nucleotide exchange rates and a fairly low GTP hydrolysis rate. Plays a role in control of the cell cycle, stress response, ribosome biogenesis and in those bacteria that undergo differentiation, in morphogenesis control. The chain is GTPase Obg from Rickettsia akari (strain Hartford).